Reading from the N-terminus, the 143-residue chain is Small ribosomal subunit protein eS12 (143 aa).

The protein belongs to the eukaryotic ribosomal protein eS12 family.

The protein is Small ribosomal subunit protein eS12 (RPS12) of Hordeum vulgare (Barley).